We begin with the raw amino-acid sequence, 160 residues long: Fimbrial protein (160 aa).

A propeptide spans 1–7 (MKSLQKG) (leader sequence). At F8 the chain carries N-methylphenylalanine. Residues 8 to 28 (FTLIELMIVVAIIGILAAFAI) traverse the membrane as a helical segment.

The protein belongs to the N-Me-Phe pilin family. As to quaternary structure, the pili are polar flexible filaments of about 5.4 nanometers diameter and 2.5 micrometers average length; they consist of only a single polypeptide chain arranged in a helical configuration of five subunits per turn in the assembled pilus.

It is found in the fimbrium. It localises to the membrane. The protein is Fimbrial protein (fimA) of Dichelobacter nodosus (Bacteroides nodosus).